We begin with the raw amino-acid sequence, 878 residues long: Protein translocase subunit SecA (878 aa).

ATP is bound by residues glutamine 79, 97–101 (GEGKT), and aspartate 487.

The protein belongs to the SecA family.

The protein resides in the plastid. Its subcellular location is the chloroplast stroma. It is found in the chloroplast thylakoid membrane. It carries out the reaction ATP + H2O + cellular proteinSide 1 = ADP + phosphate + cellular proteinSide 2.. Functionally, has a central role in coupling the hydrolysis of ATP to the transfer of proteins across the thylakoid membrane. The chain is Protein translocase subunit SecA from Antithamnion sp. (Red alga).